The following is a 160-amino-acid chain: Transcription elongation factor GreA 2 (160 aa).

The stretch at Met9–Gln73 forms a coiled coil.

It belongs to the GreA/GreB family.

In terms of biological role, necessary for efficient RNA polymerase transcription elongation past template-encoded arresting sites. The arresting sites in DNA have the property of trapping a certain fraction of elongating RNA polymerases that pass through, resulting in locked ternary complexes. Cleavage of the nascent transcript by cleavage factors such as GreA or GreB allows the resumption of elongation from the new 3'terminus. GreA releases sequences of 2 to 3 nucleotides. The polypeptide is Transcription elongation factor GreA 2 (Lactiplantibacillus plantarum (strain ATCC BAA-793 / NCIMB 8826 / WCFS1) (Lactobacillus plantarum)).